The following is a 215-amino-acid chain: FBD domain-containing protein At3g58975 (215 aa).

The 78-residue stretch at 122-199 (RSLTSCPVKK…KLSSCNVQLL (78 aa)) folds into the FBD domain.

In Arabidopsis thaliana (Mouse-ear cress), this protein is FBD domain-containing protein At3g58975.